A 304-amino-acid polypeptide reads, in one-letter code: Glutaminase (304 aa).

Positions 63, 114, 158, 165, 189, 240, and 258 each coordinate substrate.

This sequence belongs to the glutaminase family. Homotetramer.

The enzyme catalyses L-glutamine + H2O = L-glutamate + NH4(+). The polypeptide is Glutaminase (Shewanella baltica (strain OS185)).